Reading from the N-terminus, the 64-residue chain is Large ribosomal subunit protein eL37 (64 aa).

Zn(2+) is bound by residues cysteine 20, cysteine 23, cysteine 35, and cysteine 38. A C4-type zinc finger spans residues 20-38 (CRRCGRRAFHVRKKVCAAC).

The protein belongs to the eukaryotic ribosomal protein eL37 family. Requires Zn(2+) as cofactor.

Its function is as follows. Binds to the 23S rRNA. The protein is Large ribosomal subunit protein eL37 of Methanococcus maripaludis (strain DSM 14266 / JCM 13030 / NBRC 101832 / S2 / LL).